Reading from the N-terminus, the 160-residue chain is Cyclic pyranopterin monophosphate synthase (160 aa).

Residues 75-77 (LCH) and 113-114 (ME) contribute to the substrate site. D128 is a catalytic residue.

It belongs to the MoaC family. Homohexamer; trimer of dimers.

It carries out the reaction (8S)-3',8-cyclo-7,8-dihydroguanosine 5'-triphosphate = cyclic pyranopterin phosphate + diphosphate. It functions in the pathway cofactor biosynthesis; molybdopterin biosynthesis. In terms of biological role, catalyzes the conversion of (8S)-3',8-cyclo-7,8-dihydroguanosine 5'-triphosphate to cyclic pyranopterin monophosphate (cPMP). The sequence is that of Cyclic pyranopterin monophosphate synthase from Ruthia magnifica subsp. Calyptogena magnifica.